We begin with the raw amino-acid sequence, 474 residues long: MTKKLHIKTWGCQMNEYDSSKMADLLETTHGFTLTDVAEEADILLLNTCSIREKAQEKVFHQLGRWKTLKEKNPDVIIGVGGCVASQEGDHIRDRARYVDIIFGPQTLHRLPEMINQVKGTRSPVVDISFPEIEKFDRLPEPRAEGPTAFVSIMEGCNKYCTYCVVPYTRGEEVSRPSDDIVLEIAQLAAQGVREVNLLGQNVNAWRGENYDGTTGTFADLLRLVAAIDGIDRIRFTTSHPIEFTDDIIEVYRDTPELVSFLHLPVQSGSDRVLNMMGRTHTALEYKAIIRKLRAARPDIQISSDFIVGFPGETQQDFEQTMKLIAEVNFDMSYSFIFSARPGTPAADMVDDVPEEEKKQRLYILQERINQQAMAWSRRMLGTTQRILVEGTSRKSIMELSGRTENNRVVNFEGSPDMVGKFVDVEITEVFPNSLRGKVIRTEDEMGLRVVESPESIIARTRKENELGVGIFQP.

Positions 3–120 constitute an MTTase N-terminal domain; sequence KKLHIKTWGC…LPEMINQVKG (118 aa). [4Fe-4S] cluster is bound by residues C12, C49, C83, C157, C161, and C164. A Radical SAM core domain is found at 143-375; the sequence is RAEGPTAFVS…QERINQQAMA (233 aa). The region spanning 378-441 is the TRAM domain; it reads RRMLGTTQRI…PNSLRGKVIR (64 aa).

It belongs to the methylthiotransferase family. MiaB subfamily. Monomer. Requires [4Fe-4S] cluster as cofactor.

The protein localises to the cytoplasm. The catalysed reaction is N(6)-dimethylallyladenosine(37) in tRNA + (sulfur carrier)-SH + AH2 + 2 S-adenosyl-L-methionine = 2-methylsulfanyl-N(6)-dimethylallyladenosine(37) in tRNA + (sulfur carrier)-H + 5'-deoxyadenosine + L-methionine + A + S-adenosyl-L-homocysteine + 2 H(+). Its function is as follows. Catalyzes the methylthiolation of N6-(dimethylallyl)adenosine (i(6)A), leading to the formation of 2-methylthio-N6-(dimethylallyl)adenosine (ms(2)i(6)A) at position 37 in tRNAs that read codons beginning with uridine. This Cronobacter sakazakii (strain ATCC BAA-894) (Enterobacter sakazakii) protein is tRNA-2-methylthio-N(6)-dimethylallyladenosine synthase.